Reading from the N-terminus, the 286-residue chain is uncharacterized protein (286 aa).

This is an uncharacterized protein from Schizosaccharomyces pombe (strain 972 / ATCC 24843) (Fission yeast).